We begin with the raw amino-acid sequence, 126 residues long: Aspartate 1-decarboxylase (126 aa).

Ser25 serves as the catalytic Schiff-base intermediate with substrate; via pyruvic acid. At Ser25 the chain carries Pyruvic acid (Ser). Thr57 provides a ligand contact to substrate. Catalysis depends on Tyr58, which acts as the Proton donor. Position 73-75 (73-75) interacts with substrate; the sequence is GAA.

The protein belongs to the PanD family. As to quaternary structure, heterooctamer of four alpha and four beta subunits. Requires pyruvate as cofactor. Post-translationally, is synthesized initially as an inactive proenzyme, which is activated by self-cleavage at a specific serine bond to produce a beta-subunit with a hydroxyl group at its C-terminus and an alpha-subunit with a pyruvoyl group at its N-terminus.

The protein resides in the cytoplasm. The catalysed reaction is L-aspartate + H(+) = beta-alanine + CO2. Its pathway is cofactor biosynthesis; (R)-pantothenate biosynthesis; beta-alanine from L-aspartate: step 1/1. Functionally, catalyzes the pyruvoyl-dependent decarboxylation of aspartate to produce beta-alanine. This Pectobacterium carotovorum subsp. carotovorum (strain PC1) protein is Aspartate 1-decarboxylase.